The following is a 208-amino-acid chain: Uracil phosphoribosyltransferase (208 aa).

5-phospho-alpha-D-ribose 1-diphosphate contacts are provided by residues arginine 78, arginine 103, and 130–138; that span reads DPMLATGGS. Uracil-binding positions include isoleucine 193 and 198-200; that span reads GDA. Aspartate 199 contributes to the 5-phospho-alpha-D-ribose 1-diphosphate binding site.

It belongs to the UPRTase family. Mg(2+) serves as cofactor.

The enzyme catalyses UMP + diphosphate = 5-phospho-alpha-D-ribose 1-diphosphate + uracil. Its pathway is pyrimidine metabolism; UMP biosynthesis via salvage pathway; UMP from uracil: step 1/1. Its activity is regulated as follows. Allosterically activated by GTP. In terms of biological role, catalyzes the conversion of uracil and 5-phospho-alpha-D-ribose 1-diphosphate (PRPP) to UMP and diphosphate. This chain is Uracil phosphoribosyltransferase, found in Shewanella denitrificans (strain OS217 / ATCC BAA-1090 / DSM 15013).